The following is a 458-amino-acid chain: Hyaluronidase conohyal-P1 (458 aa).

A signal peptide spans 1 to 18 (MRVVVVVTGLVVVVVATA). A disordered region spans residues 24 to 47 (HDVKSASSPLSSSSVYQGSSGDDC). A compositionally biased stretch (low complexity) spans 28 to 43 (SASSPLSSSSVYQGSS). Residues cysteine 68 and cysteine 342 are joined by a disulfide bond. N-linked (GlcNAc...) asparagine glycans are attached at residues asparagine 106 and asparagine 141. The active-site Proton donor is glutamate 151. Residues asparagine 261, asparagine 337, and asparagine 359 are each glycosylated (N-linked (GlcNAc...) asparagine). The EGF-like domain maps to 363-434 (VMADCSTTLC…VRPSRCHKQQ (72 aa)). Disulfide bonds link cysteine 367/cysteine 378, cysteine 372/cysteine 411, and cysteine 413/cysteine 422.

This sequence belongs to the glycosyl hydrolase 56 family. As to expression, expressed by the venom duct.

Its subcellular location is the secreted. The enzyme catalyses Random hydrolysis of (1-&gt;4)-linkages between N-acetyl-beta-D-glucosamine and D-glucuronate residues in hyaluronate.. Hyaluronidase catalyzes the hydrolysis of hyaluronic acid (HA), an anionic, nonsulfated glycosaminoglycan distributed widely throughout connective, epithelial, and neural tissues. In venom, they are known to enhance diffusion of the venom by degrading the extracellular matrix. The sequence is that of Hyaluronidase conohyal-P1 from Conus purpurascens (Purple cone).